The chain runs to 252 residues: Hydroxyacylglutathione hydrolase (252 aa).

Residues histidine 54, histidine 56, aspartate 58, histidine 59, histidine 111, aspartate 128, and histidine 166 each contribute to the Zn(2+) site.

The protein belongs to the metallo-beta-lactamase superfamily. Glyoxalase II family. As to quaternary structure, monomer. Requires Zn(2+) as cofactor.

The catalysed reaction is an S-(2-hydroxyacyl)glutathione + H2O = a 2-hydroxy carboxylate + glutathione + H(+). The protein operates within secondary metabolite metabolism; methylglyoxal degradation; (R)-lactate from methylglyoxal: step 2/2. In terms of biological role, thiolesterase that catalyzes the hydrolysis of S-D-lactoyl-glutathione to form glutathione and D-lactic acid. This is Hydroxyacylglutathione hydrolase from Vibrio campbellii (strain ATCC BAA-1116).